We begin with the raw amino-acid sequence, 445 residues long: ATP-dependent protease ATPase subunit HslU (445 aa).

Residues Ile-17, 59-64 (GVGKTE), Asp-254, Glu-319, and Arg-391 contribute to the ATP site.

The protein belongs to the ClpX chaperone family. HslU subfamily. A double ring-shaped homohexamer of HslV is capped on each side by a ring-shaped HslU homohexamer. The assembly of the HslU/HslV complex is dependent on binding of ATP.

It localises to the cytoplasm. Functionally, ATPase subunit of a proteasome-like degradation complex; this subunit has chaperone activity. The binding of ATP and its subsequent hydrolysis by HslU are essential for unfolding of protein substrates subsequently hydrolyzed by HslV. HslU recognizes the N-terminal part of its protein substrates and unfolds these before they are guided to HslV for hydrolysis. This is ATP-dependent protease ATPase subunit HslU from Pseudomonas fluorescens (strain Pf0-1).